The following is a 125-amino-acid chain: Antitoxin MazE5 (125 aa).

Forms a complex with cognate toxin MazF5.

Functionally, antitoxin component of a type II toxin-antitoxin (TA) system. Upon expression in M.smegmatis neutralizes the effect of cognate toxin MazF5. The protein is Antitoxin MazE5 (mazE5) of Mycobacterium tuberculosis (strain ATCC 25618 / H37Rv).